A 314-amino-acid polypeptide reads, in one-letter code: Testis-specific Y-encoded protein 9 (314 aa).

The protein belongs to the nucleosome assembly protein (NAP) family.

It localises to the cytoplasm. The protein resides in the nucleus. Functionally, may be involved in sperm differentiation and proliferation. This Homo sapiens (Human) protein is Testis-specific Y-encoded protein 9.